The sequence spans 485 residues: Hexokinase-1 (485 aa).

Residues 21–468 (KELMDEIHQL…SGAGAAVIAA (448 aa)) enclose the Hexokinase domain. The interval 75–209 (TGKESGNYLA…ELPIEIVALI (135 aa)) is hexokinase small subdomain. Residues 86 to 91 (DLGGTN) and Lys111 each bind ATP. Residues Ser158, 175-176 (TK), 210-211 (ND), and Asn237 contribute to the substrate site. The interval 210–457 (NDTVGTLIAS…DPITIVPAED (248 aa)) is hexokinase large subdomain. A Phosphoserine modification is found at Ser245. Glu269 is a binding site for substrate. Ser272 carries the phosphoserine modification. Glu302 contributes to the substrate binding site. Residues 307–308 (GY), 344–348 (TSYPA), and 419–423 (SVYNK) each bind ATP.

Belongs to the hexokinase family. In terms of assembly, homodimer.

The enzyme catalyses a D-hexose + ATP = a D-hexose 6-phosphate + ADP + H(+). The catalysed reaction is D-fructose + ATP = D-fructose 6-phosphate + ADP + H(+). It catalyses the reaction D-glucose + ATP = D-glucose 6-phosphate + ADP + H(+). It functions in the pathway carbohydrate metabolism; hexose metabolism. Its pathway is carbohydrate degradation; glycolysis; D-glyceraldehyde 3-phosphate and glycerone phosphate from D-glucose: step 1/4. Subject to allosteric control. Substrate inhibition by ATP. In terms of biological role, catalyzes the phosphorylation of hexose, such as D-glucose and D-fructose, to hexose 6-phosphate (D-glucose 6-phosphate and D-fructose 6-phosphate, respectively). Mediates the initial step of glycolysis by catalyzing phosphorylation of D-glucose to D-glucose 6-phosphate. This Saccharomyces cerevisiae (strain ATCC 204508 / S288c) (Baker's yeast) protein is Hexokinase-1 (HXK1).